Here is a 220-residue protein sequence, read N- to C-terminus: dITP/XTP pyrophosphatase (220 aa).

13 to 18 (SHNAGK) serves as a coordination point for substrate. Residues D45 and D74 each contribute to the Mg(2+) site. Residue D74 is the Proton acceptor of the active site. Substrate is bound by residues S75, 163–166 (FGYD), K186, and 199–200 (HR).

It belongs to the HAM1 NTPase family. In terms of assembly, homodimer. Mg(2+) serves as cofactor.

The enzyme catalyses XTP + H2O = XMP + diphosphate + H(+). It catalyses the reaction dITP + H2O = dIMP + diphosphate + H(+). It carries out the reaction ITP + H2O = IMP + diphosphate + H(+). In terms of biological role, pyrophosphatase that catalyzes the hydrolysis of nucleoside triphosphates to their monophosphate derivatives, with a high preference for the non-canonical purine nucleotides XTP (xanthosine triphosphate), dITP (deoxyinosine triphosphate) and ITP. Seems to function as a house-cleaning enzyme that removes non-canonical purine nucleotides from the nucleotide pool, thus preventing their incorporation into DNA/RNA and avoiding chromosomal lesions. The polypeptide is dITP/XTP pyrophosphatase (Brucella melitensis biotype 1 (strain ATCC 23456 / CCUG 17765 / NCTC 10094 / 16M)).